We begin with the raw amino-acid sequence, 253 residues long: Tryptophan synthase alpha chain (253 aa).

Catalysis depends on proton acceptor residues Glu-46 and Asp-57.

Belongs to the TrpA family. As to quaternary structure, tetramer of two alpha and two beta chains.

It catalyses the reaction (1S,2R)-1-C-(indol-3-yl)glycerol 3-phosphate + L-serine = D-glyceraldehyde 3-phosphate + L-tryptophan + H2O. It participates in amino-acid biosynthesis; L-tryptophan biosynthesis; L-tryptophan from chorismate: step 5/5. Functionally, the alpha subunit is responsible for the aldol cleavage of indoleglycerol phosphate to indole and glyceraldehyde 3-phosphate. The chain is Tryptophan synthase alpha chain from Dictyoglomus turgidum (strain DSM 6724 / Z-1310).